A 94-amino-acid polypeptide reads, in one-letter code: Large ribosomal subunit protein uL23 (94 aa).

The protein belongs to the universal ribosomal protein uL23 family. As to quaternary structure, part of the 50S ribosomal subunit. Contacts protein L29, and trigger factor when it is bound to the ribosome.

Its function is as follows. One of the early assembly proteins it binds 23S rRNA. One of the proteins that surrounds the polypeptide exit tunnel on the outside of the ribosome. Forms the main docking site for trigger factor binding to the ribosome. The protein is Large ribosomal subunit protein uL23 of Roseiflexus sp. (strain RS-1).